Reading from the N-terminus, the 307-residue chain is Protoheme IX farnesyltransferase (307 aa).

8 consecutive transmembrane segments (helical) span residues 32 to 52, 65 to 85, 108 to 128, 131 to 151, 158 to 178, 186 to 206, 251 to 271, and 287 to 307; these read MGIV…ALHF, FFTI…NNYI, PGFA…FLLL, PMAV…YSLW, LNTV…WAAI, IAWM…LALA, LGIT…VLGF, and FVYS…VTFF.

It belongs to the UbiA prenyltransferase family. Protoheme IX farnesyltransferase subfamily. In terms of assembly, interacts with CtaA.

The protein localises to the cell membrane. The enzyme catalyses heme b + (2E,6E)-farnesyl diphosphate + H2O = Fe(II)-heme o + diphosphate. The protein operates within porphyrin-containing compound metabolism; heme O biosynthesis; heme O from protoheme: step 1/1. Its function is as follows. Converts heme B (protoheme IX) to heme O by substitution of the vinyl group on carbon 2 of heme B porphyrin ring with a hydroxyethyl farnesyl side group. The sequence is that of Protoheme IX farnesyltransferase from Bacillus cereus (strain ATCC 10987 / NRS 248).